The sequence spans 698 residues: Elongation factor G (698 aa).

A tr-type G domain is found at 8–290 (ERYRNIGISA…AVIEFLPSPV (283 aa)). GTP contacts are provided by residues 17–24 (AHIDAGKT), 88–92 (DTPGH), and 142–145 (NKMD).

Belongs to the TRAFAC class translation factor GTPase superfamily. Classic translation factor GTPase family. EF-G/EF-2 subfamily.

It localises to the cytoplasm. Its function is as follows. Catalyzes the GTP-dependent ribosomal translocation step during translation elongation. During this step, the ribosome changes from the pre-translocational (PRE) to the post-translocational (POST) state as the newly formed A-site-bound peptidyl-tRNA and P-site-bound deacylated tRNA move to the P and E sites, respectively. Catalyzes the coordinated movement of the two tRNA molecules, the mRNA and conformational changes in the ribosome. This Azoarcus sp. (strain BH72) protein is Elongation factor G.